Reading from the N-terminus, the 104-residue chain is Meiotically up-regulated gene 150 protein (104 aa).

3 helical membrane-spanning segments follow: residues Phe-30–Ile-50, Thr-54–Phe-74, and Leu-84–Ile-104.

Its subcellular location is the endoplasmic reticulum membrane. In terms of biological role, has a role in meiosis. In Schizosaccharomyces pombe (strain 972 / ATCC 24843) (Fission yeast), this protein is Meiotically up-regulated gene 150 protein (mug150).